We begin with the raw amino-acid sequence, 174 residues long: Regenerating islet-derived protein 3-gamma (174 aa).

The N-terminal stretch at 1 to 26 (MLPRITITIMSWMLLSCLMLLSQVQG) is a signal peptide. A propeptide spanning residues 27 to 37 (EVAKKDAPSSR) is cleaved from the precursor. 3 disulfides stabilise this stretch: cysteine 40–cysteine 51, cysteine 68–cysteine 170, and cysteine 145–cysteine 162. One can recognise a C-type lectin domain in the interval 47–171 (YGSYCYALFS…CNLELPYVCK (125 aa)). The segment at 103–118 (WIGLHDPTLGYEPNRG) is sufficient to activate EXTL3. Histidine 107 is a Zn(2+) binding site. The short motif at 114-116 (EPN) is the EPN element. Zn(2+) contacts are provided by glutamate 121 and histidine 144.

As to quaternary structure, forms a hexameric membrane-permeabilizing oligomeric pore on membrane phospholipids. The hexamer is formed by three dimers related by helical symmetry. Forms filaments, filamentation traps pore complexes and limits damage to host cells. Interacts with EXTL3. In terms of processing, proteolytic processing by trypsin removes an inhibitory N-terminal propeptide and is essential for peptidoglycan binding and antibacterial activity. Predominantly expressed in the small intestine, including Paneth cells (at protein level). Hardly detectable in the colon (at protein level). Highly expressed in the lung epithelium during methicillin-resistant S.aureus infection and allergic airway inflammation (at protein level). Skin injury increases its epidermal expression. Also expressed in the pancreas. Expressed by nocireceptors.

The protein localises to the secreted. The protein resides in the cytoplasm. Lipopolysaccharide inhibits pore-forming activity, explaining why is bactericidal for Gram-positive but not Gram-negative bacteria. Bactericidal C-type lectin which acts exclusively against Gram-positive bacteria and mediates bacterial killing by binding to surface-exposed carbohydrate moieties of peptidoglycan. Restricts bacterial colonization of the intestinal epithelial surface and consequently limits activation of adaptive immune responses by the microbiota. Its function is as follows. Acts as a hormone in response to different stimuli like anti-inflammatory signals, such as IL17A, or gut microbiome. Is secreted by different cell types to activate its receptor EXTL3 and induce cell specific signaling pathways. Induced by IL17A in keratinocytes, regulates keratinocyte proliferation and differentiation after skin injury. In parallel, inhibits skin inflammation through the inhibition of inflammatory cytokines such as IL6 and TNF. Induced by IL22 in lung epithelial cells, inhibits cytokine production and regulates allergic airway inflammation. Induced in small intestine by inulin-enriched diet and Lactobacillus gasseri enriched microbiome, plays a role in the improvement of gut barrier function, the regulation of energy balance and glucose levels. Modulates microbiota composition in duodenal contents. Produced by nociceptor in response to endotoxins, prevents endotoxic death by targeting kynurenine pathway in microglia. In terms of biological role, has bacteriostatic activity. Functionally, has bactericidal activity against L.monocytogenes and methicillin-resistant S.aureus. This chain is Regenerating islet-derived protein 3-gamma, found in Mus musculus (Mouse).